The chain runs to 349 residues: Probable protease SohB (349 aa).

The Periplasmic portion of the chain corresponds to 1-8 (MELLSEYG). Residues 9 to 29 (LFLAKIVTVVLAIAAIAAIIV) form a helical membrane-spanning segment. Residues 30–349 (NVAQRNKRQR…WWQRGQKPLM (320 aa)) lie on the Cytoplasmic side of the membrane. The active-site Nucleophile is S178. K230 (proton donor/acceptor) is an active-site residue.

This sequence belongs to the peptidase S49 family.

The protein localises to the cell inner membrane. In terms of biological role, multicopy suppressor of the HtrA (DegP) null phenotype. It is possibly a protease, not essential for bacterial viability. This is Probable protease SohB (sohB) from Escherichia coli (strain K12).